A 452-amino-acid polypeptide reads, in one-letter code: CASP-like protein 4A1 (452 aa).

Over residues 1-17 (MGLRDSLKEREDRRSSE) the composition is skewed to basic and acidic residues. 3 disordered regions span residues 1-39 (MGLRDSLKEREDRRSSEEEGDARQSWMTRESTTGWRKES), 71-147 (RAGP…ARSS), and 164-283 (AKYV…VQFR). The Cytoplasmic portion of the chain corresponds to 1–305 (MGLRDSLKER…KRRAAAMQRT (305 aa)). The span at 25–34 (SWMTRESTTG) shows a compositional bias: polar residues. Low complexity-rich tracts occupy residues 105 to 126 (QAQATASPSPSPSPTRGRTGSG) and 190 to 205 (GWYSWNGGRTRTAAPP). A compositionally biased stretch (pro residues) spans 211–272 (DPPPAPPRRQ…TAPAPAPVPA (62 aa)). A helical transmembrane segment spans residues 306–326 (ALLARGAAAGLCLAALAVLAA). Over 327–347 (DTRKGWARDSYSNYTQFRYSE) the chain is Extracellular. N-linked (GlcNAc...) asparagine glycosylation is present at Asn-339. The chain crosses the membrane as a helical span at residues 348 to 368 (AVNVIGFIYSVFQFVALVELM). Residues 369-389 (RRNKHLIPHPKRDLFDFTMDQ) are Cytoplasmic-facing. Residues 390-406 (VLTYLLISSSSSATARV) form a helical membrane-spanning segment. Over 407 to 423 (SDLIDNWGSDPFPSMAN) the chain is Extracellular. Asn-423 is a glycosylation site (N-linked (GlcNAc...) asparagine). A helical membrane pass occupies residues 424–444 (GSIAISFLAFAVFAICSLISA). Topologically, residues 445-452 (YNLFRRDV) are cytoplasmic.

It belongs to the Casparian strip membrane proteins (CASP) family. In terms of assembly, homodimer and heterodimers.

It localises to the cell membrane. The protein is CASP-like protein 4A1 of Sorghum bicolor (Sorghum).